The primary structure comprises 829 residues: DNA topoisomerase 1 (829 aa).

Positions 1 to 248 are disordered; the sequence is MSEDHVQNDS…AKGNEEGVKK (248 aa). Positions 22–36 are enriched in basic residues; the sequence is HKHKKDKEHRHKEHK. 3 stretches are compositionally biased toward basic and acidic residues: residues 37 to 58, 68 to 159, and 193 to 220; these read KDKDREKSKHNNSEHRDPSEKK, KHRE…EKMK, and KENKAMKRPREDDEDYKPKKIKSEDDKK. Interaction with DNA regions lie at residues 481-482, 544-549, and 641-643; these read KY, RAGNEK, and TAK. Residues 488 to 821 form the Topo IB-type catalytic domain; the sequence is SSRIKGEKDW…SIWQTTTSNF (334 aa). The active-site O-(3'-phospho-DNA)-tyrosine intermediate is tyrosine 779.

Belongs to the type IB topoisomerase family. In terms of assembly, monomer.

It localises to the nucleus. The catalysed reaction is ATP-independent breakage of single-stranded DNA, followed by passage and rejoining.. In terms of biological role, releases the supercoiling and torsional tension of DNA introduced during the DNA replication and transcription by transiently cleaving and rejoining one strand of the DNA duplex. Introduces a single-strand break via transesterification at a target site in duplex DNA. The scissile phosphodiester is attacked by the catalytic tyrosine of the enzyme, resulting in the formation of a DNA-(3'-phosphotyrosyl)-enzyme intermediate and the expulsion of a 5'-OH DNA strand. TThe free DNA strand then rotates around the intact phosphodiester bond on the opposing strand, thus removing DNA supercoils. Finally, in the religation step, the DNA 5'-OH attacks the covalent intermediate to expel the active-site tyrosine and restore the DNA phosphodiester backbone. May play a role in the circadian transcription of the core circadian clock component BMAL1. The sequence is that of DNA topoisomerase 1 (top1) from Xenopus laevis (African clawed frog).